Here is a 118-residue protein sequence, read N- to C-terminus: Succinate dehydrogenase assembly factor 4, mitochondrial (118 aa).

The transit peptide at 1 to 30 directs the protein to the mitochondrion; sequence MQSVTRQTARVLPQMGKQVSYLSTSGAWRA. Positions 65 to 118 are disordered; the sequence is GKLDEFSRHPYQEKEPLKPWPNQTNPYTGEIGGPAGPEPTRYGDWERKGRVSDF. 2 stretches are compositionally biased toward basic and acidic residues: residues 66–81 and 105–118; these read KLDEFSRHPYQEKEPL and RYGDWERKGRVSDF.

This sequence belongs to the SDHAF4 family. In terms of assembly, interacts with SdhA in its FAD-bound form.

The protein resides in the mitochondrion matrix. In terms of biological role, plays an essential role in the assembly of succinate dehydrogenase (SDH), an enzyme complex (also referred to as respiratory complex II) that is a component of both the tricarboxylic acid (TCA) cycle and the mitochondrial electron transport chain, and which couples the oxidation of succinate to fumarate with the reduction of ubiquinone (coenzyme Q) to ubiquinol. Binds to the flavoprotein subunit SdhA in its FAD-bound form, blocking the generation of excess reactive oxygen species (ROS) and facilitating its assembly with the iron-sulfur protein subunit SdhB into the SDH catalytic dimer. The protein is Succinate dehydrogenase assembly factor 4, mitochondrial of Drosophila melanogaster (Fruit fly).